Reading from the N-terminus, the 265-residue chain is NAD kinase (265 aa).

The active-site Proton acceptor is the Asp45. NAD(+) is bound by residues 45-46, 121-122, Arg147, Asp149, Ala184, and Gln221; these read DG and NE.

The protein belongs to the NAD kinase family. The cofactor is a divalent metal cation.

Its subcellular location is the cytoplasm. It carries out the reaction NAD(+) + ATP = ADP + NADP(+) + H(+). Its function is as follows. Involved in the regulation of the intracellular balance of NAD and NADP, and is a key enzyme in the biosynthesis of NADP. Catalyzes specifically the phosphorylation on 2'-hydroxyl of the adenosine moiety of NAD to yield NADP. In Leuconostoc citreum (strain KM20), this protein is NAD kinase.